We begin with the raw amino-acid sequence, 195 residues long: Probable nicotinate-nucleotide adenylyltransferase (195 aa).

The protein belongs to the NadD family.

The enzyme catalyses nicotinate beta-D-ribonucleotide + ATP + H(+) = deamido-NAD(+) + diphosphate. It participates in cofactor biosynthesis; NAD(+) biosynthesis; deamido-NAD(+) from nicotinate D-ribonucleotide: step 1/1. Catalyzes the reversible adenylation of nicotinate mononucleotide (NaMN) to nicotinic acid adenine dinucleotide (NaAD). This is Probable nicotinate-nucleotide adenylyltransferase from Gluconobacter oxydans (strain 621H) (Gluconobacter suboxydans).